The primary structure comprises 203 residues: MTTNLLDQMNTLVPMVVEQSNKGERAYDIYSRLLKERIIFLVGPINDNVASLVTAQLLFLESEDPKKEINLYINSPGGLVTAGLGIYDTMQYIKPDVSTLCIGQAASMGSFLLAAGKKGKRFSLPNSRIMVHQPSAGFQGQATDIEIHANEVLALKKRLNEIYSKHTGKSVDDVKKALERDNFMTPDTAKEFGLIDEVVENRS.

The active-site Nucleophile is Ser107. The active site involves His132.

The protein belongs to the peptidase S14 family. In terms of assembly, fourteen ClpP subunits assemble into 2 heptameric rings which stack back to back to give a disk-like structure with a central cavity, resembling the structure of eukaryotic proteasomes.

Its subcellular location is the cytoplasm. It carries out the reaction Hydrolysis of proteins to small peptides in the presence of ATP and magnesium. alpha-casein is the usual test substrate. In the absence of ATP, only oligopeptides shorter than five residues are hydrolyzed (such as succinyl-Leu-Tyr-|-NHMec, and Leu-Tyr-Leu-|-Tyr-Trp, in which cleavage of the -Tyr-|-Leu- and -Tyr-|-Trp bonds also occurs).. Cleaves peptides in various proteins in a process that requires ATP hydrolysis. Has a chymotrypsin-like activity. Plays a major role in the degradation of misfolded proteins. This Pelagibacter ubique (strain HTCC1062) protein is ATP-dependent Clp protease proteolytic subunit.